An 83-amino-acid chain; its full sequence is Conotoxin VnMKLT1-022 (83 aa).

Residues 1–22 (MKLMCMMIVAVLFLTAWTFVTA) form the signal peptide. The propeptide occupies 23–55 (DDSINGPENRRIWEKLLSKTRDEMKNPEASKLN). 3 disulfides stabilise this stretch: Cys-59/Cys-74, Cys-66/Cys-78, and Cys-73/Cys-82.

It belongs to the conotoxin O1 superfamily. In terms of tissue distribution, expressed by the venom duct.

The protein resides in the secreted. This chain is Conotoxin VnMKLT1-022, found in Conus ventricosus (Mediterranean cone).